A 177-amino-acid polypeptide reads, in one-letter code: Large ribosomal subunit protein uL6 (177 aa).

The protein belongs to the universal ribosomal protein uL6 family. In terms of assembly, part of the 50S ribosomal subunit.

Functionally, this protein binds to the 23S rRNA, and is important in its secondary structure. It is located near the subunit interface in the base of the L7/L12 stalk, and near the tRNA binding site of the peptidyltransferase center. In Teredinibacter turnerae (strain ATCC 39867 / T7901), this protein is Large ribosomal subunit protein uL6.